A 634-amino-acid polypeptide reads, in one-letter code: TATA box-binding protein-associated factor RNA polymerase I subunit B (634 aa).

The RRN7-type zinc finger occupies 19–51; it reads LVCEYCGHGSEYAEDDADDGFFTCRQCSAIHTS. Zn(2+) contacts are provided by cysteine 21, cysteine 24, cysteine 42, and cysteine 45. Residues 51 to 80 form a B-reader region; sequence STQNTATNPFDFPMTPAHLSAHRRPTQPTP. Residues 54–107 are disordered; it reads NTATNPFDFPMTPAHLSAHRRPTQPTPTPKPFPAPRGAATGAAAPDFDDLGEPS. Residues 77-87 show a composition bias toward pro residues; it reads QPTPTPKPFPA. The interval 81–83 is B-linker; the sequence is TPK. Residues 84 to 281 are N-terminal cyclin fold; that stretch reads PFPAPRGAAT…DKLLGSSLND (198 aa). Low complexity predominate over residues 88 to 98; it reads PRGAATGAAAP. A C-terminal cyclin fold region spans residues 282–284; the sequence is CPL.

Belongs to the RRN7/TAF1B family.

It localises to the nucleus. Its subcellular location is the nucleolus. Component of RNA polymerase I core factor complex that acts as a GTF2B/TFIIB-like factor and plays a key role in multiple steps during transcription initiation such as pre-initiation complex (PIC) assembly and postpolymerase recruitment events in polymerase I (Pol I) transcription. Binds rDNA promoters and plays a role in Pol I recruitment. The protein is TATA box-binding protein-associated factor RNA polymerase I subunit B of Oryza sativa subsp. japonica (Rice).